We begin with the raw amino-acid sequence, 328 residues long: Hairy/enhancer-of-split related with YRPW motif-like protein (328 aa).

Residues 1-57 (MKRPKEPSGSDGESDGPIDVGQEGQLSQMARPLSTPSSSQMQARKKHRGIIEKRRRD) are disordered. Polar residues predominate over residues 24 to 42 (GQLSQMARPLSTPSSSQMQ). The segment at 42-111 (QARKKHRGII…GGTGFFDARA (70 aa)) is transcriptional repression and interaction with NCOR1 and SIN3A. The bHLH domain maps to 43-98 (ARKKHRGIIEKRRRDRINSSLSELRRLVPTAFEKQGSSKLEKAEVLQMTVDHLKML). Residues 116-153 (FRSIGFRECLTEVIRYLGVLEGPSSRADPVRIRLLSHL) enclose the Orange domain. The disordered stretch occupies residues 239-308 (SRGASSTRRA…NSSSPGPAGR (70 aa)). Residues 261–270 (APSSRAARSS) are compositionally biased toward low complexity.

The protein belongs to the HEY family. In terms of assembly, self-associates. Interacts with GATA4, GATA6, HES1, HEY1 and HEY2. Interacts with HDAC1, NCOR1 and SIN3A.

Its subcellular location is the nucleus. Downstream effector of Notch signaling which may be required for cardiovascular development. Transcriptional repressor which binds preferentially to the canonical E box sequence 5'-CACGTG-3'. Represses transcription by the cardiac transcriptional activators GATA4 and GATA6. The sequence is that of Hairy/enhancer-of-split related with YRPW motif-like protein (HEYL) from Homo sapiens (Human).